A 309-amino-acid polypeptide reads, in one-letter code: NAD kinase 2 (309 aa).

Catalysis depends on D81, which acts as the Proton acceptor. NAD(+)-binding positions include 81-82, 155-156, D185, 196-201, and N255; these read DG, NE, and TAYALS.

The protein belongs to the NAD kinase family. A divalent metal cation serves as cofactor.

The protein localises to the cytoplasm. The catalysed reaction is NAD(+) + ATP = ADP + NADP(+) + H(+). Its function is as follows. Involved in the regulation of the intracellular balance of NAD and NADP, and is a key enzyme in the biosynthesis of NADP. Catalyzes specifically the phosphorylation on 2'-hydroxyl of the adenosine moiety of NAD to yield NADP. This is NAD kinase 2 from Gloeobacter violaceus (strain ATCC 29082 / PCC 7421).